The chain runs to 99 residues: PE family immunomodulator PE35 (99 aa).

The PE domain maps to Met-1–Asp-90.

The protein belongs to the mycobacterial PE family. As to quaternary structure, interacts with PPE68. PE35/PPE68 complex interacts with human TLR2.

Its subcellular location is the secreted. The protein resides in the cell surface. Its function is as follows. Plays a major role in RD1-associated pathogenesis, and may contribute to the establishment and maintenance of M.tuberculosis infection. Together with PPE68, stimulates the secretion of IL-10 and MCP-1 from human macrophages, via the interaction with human Toll-like receptor 2 (TLR2). The protein is PE family immunomodulator PE35 (PE35) of Mycobacterium tuberculosis (strain ATCC 25618 / H37Rv).